The primary structure comprises 371 residues: Gamma-tocopherol methyltransferase, chloroplastic (371 aa).

A chloroplast-targeting transit peptide spans 1–65; sequence MAAAPVFFPS…NSNRIASRLQ (65 aa). The segment at 153–162 is SAM motif I; sequence IVDVGCGIGG. Residues 216–224 form an SAM motif II region; that stretch reads GQFDLVWSM. The SAM motif III stretch occupies residues 243 to 252; the sequence is VAAPGATIII.

The protein belongs to the class I-like SAM-binding methyltransferase superfamily. gTMT family. Homodimer.

Its subcellular location is the plastid. The protein resides in the chloroplast inner membrane. It catalyses the reaction picrinine + S-adenosyl-L-methionine = ervincine + S-adenosyl-L-homocysteine + H(+). It functions in the pathway alkaloid biosynthesis; vindoline biosynthesis. In terms of biological role, S-adenosyl-L-methionine-dependent N-methyltransferase involved in the biosynthesis of biologically active monoterpenoid indole alkaloids (MIAs) natural products including vindoline. Inactive with picrinine as substrate. The sequence is that of Gamma-tocopherol methyltransferase, chloroplastic from Catharanthus roseus (Madagascar periwinkle).